The following is a 207-amino-acid chain: Small ribosomal subunit protein uS4 (207 aa).

The tract at residues 31–56 (KCKLDSKPGQHGRTSGARTSDYGNQL) is disordered. Positions 42–53 (GRTSGARTSDYG) are enriched in polar residues. Residues 97–157 (ARLDNVVYRM…EKSKKQVRIV (61 aa)) form the S4 RNA-binding domain.

It belongs to the universal ribosomal protein uS4 family. In terms of assembly, part of the 30S ribosomal subunit. Contacts protein S5. The interaction surface between S4 and S5 is involved in control of translational fidelity.

One of the primary rRNA binding proteins, it binds directly to 16S rRNA where it nucleates assembly of the body of the 30S subunit. Functionally, with S5 and S12 plays an important role in translational accuracy. The polypeptide is Small ribosomal subunit protein uS4 (Janthinobacterium sp. (strain Marseille) (Minibacterium massiliensis)).